Consider the following 317-residue polypeptide: Adenine deaminase (317 aa).

Residues His-14, His-16, and His-194 each contribute to the Zn(2+) site. The active-site Proton donor is Glu-197. Residue Asp-275 coordinates Zn(2+). Substrate is bound at residue Asp-276.

This sequence belongs to the metallo-dependent hydrolases superfamily. Adenosine and AMP deaminases family. Adenine deaminase type 2 subfamily. Requires Zn(2+) as cofactor.

It carries out the reaction adenine + H2O + H(+) = hypoxanthine + NH4(+). In terms of biological role, catalyzes the hydrolytic deamination of adenine to hypoxanthine. Plays an important role in the purine salvage pathway and in nitrogen catabolism. In Pseudomonas syringae pv. tomato (strain ATCC BAA-871 / DC3000), this protein is Adenine deaminase.